Reading from the N-terminus, the 451-residue chain is Adenylyltransferase and sulfurtransferase MOCS3-2 (451 aa).

The interval 42–62 (GEDSDEAEESSNDMPTPQTKL) is disordered. Residues 43-52 (EDSDEAEESS) show a composition bias toward acidic residues. Phosphothreonine is present on Thr-60. ATP contacts are provided by residues Gly-99, Asp-120, 127 to 131 (SNLHR), Lys-144, and 188 to 189 (DN). The Zn(2+) site is built by Cys-229 and Cys-232. The Glycyl thioester intermediate; for adenylyltransferase activity role is filled by Cys-246. Residues Cys-304 and Cys-307 each coordinate Zn(2+). One can recognise a Rhodanese domain in the interval 353–449 (QSQPHLLLDV…WTGSVDATFP (97 aa)). Cys-408 functions as the Cysteine persulfide intermediate; for sulfurtransferase activity in the catalytic mechanism.

In the N-terminal section; belongs to the HesA/MoeB/ThiF family. UBA4 subfamily. Requires Zn(2+) as cofactor.

Its subcellular location is the cytoplasm. It carries out the reaction [molybdopterin-synthase sulfur-carrier protein]-C-terminal Gly-Gly + ATP + H(+) = [molybdopterin-synthase sulfur-carrier protein]-C-terminal Gly-Gly-AMP + diphosphate. It catalyses the reaction [molybdopterin-synthase sulfur-carrier protein]-C-terminal Gly-Gly-AMP + S-sulfanyl-L-cysteinyl-[cysteine desulfurase] + AH2 = [molybdopterin-synthase sulfur-carrier protein]-C-terminal-Gly-aminoethanethioate + L-cysteinyl-[cysteine desulfurase] + A + AMP + 2 H(+). The protein operates within tRNA modification; 5-methoxycarbonylmethyl-2-thiouridine-tRNA biosynthesis. It functions in the pathway cofactor biosynthesis; molybdopterin biosynthesis. In terms of biological role, plays a central role in 2-thiolation of mcm(5)S(2)U at tRNA wobble positions of cytosolic tRNA(Lys), tRNA(Glu) and tRNA(Gln). Also essential during biosynthesis of the molybdenum cofactor. Acts by mediating the C-terminal thiocarboxylation of sulfur carriers URM1 and MOCS2A. Its N-terminus first activates URM1 and MOCS2A as acyl-adenylates (-COAMP), then the persulfide sulfur on the catalytic cysteine is transferred to URM1 and MOCS2A to form thiocarboxylation (-COSH) of their C-terminus. The reaction probably involves hydrogen sulfide that is generated from the persulfide intermediate and that acts as a nucleophile towards URM1 and MOCS2A. Subsequently, a transient disulfide bond is formed. Does not use thiosulfate as sulfur donor; NFS1 probably acting as a sulfur donor for thiocarboxylation reactions. This chain is Adenylyltransferase and sulfurtransferase MOCS3-2, found in Drosophila pseudoobscura pseudoobscura (Fruit fly).